Here is a 229-residue protein sequence, read N- to C-terminus: Large ribosomal subunit protein uL1 (229 aa).

Belongs to the universal ribosomal protein uL1 family. In terms of assembly, part of the 50S ribosomal subunit.

Functionally, binds directly to 23S rRNA. The L1 stalk is quite mobile in the ribosome, and is involved in E site tRNA release. Protein L1 is also a translational repressor protein, it controls the translation of the L11 operon by binding to its mRNA. This chain is Large ribosomal subunit protein uL1, found in Histophilus somni (strain 2336) (Haemophilus somnus).